A 275-amino-acid chain; its full sequence is Uridine-5'-phosphate dioxygenase (275 aa).

Fe cation-binding residues include His-105, Asp-107, and His-247.

Fe(2+) serves as cofactor.

It catalyses the reaction UMP + 2-oxoglutarate + O2 = uridine-5'-aldehyde + succinate + phosphate + CO2. Its pathway is antibiotic biosynthesis. Enhanced by ascorbic acid and inhibited by Zn(2+). Functionally, dioxygenase involved in the biosynthesis of the capuramycin-type nucleoside antibiotic A-102395. Catalyzes the dephosphorylation and oxidation of UMP to generate uridine-5'-aldehyde. Can also use the alternative alpha-keto acids pyruvate and alpha-ketoadipate (2-oxoadipate), with very low efficiency. Cannot use alpha-ketobutyrate, alpha-ketovalerate and oxaloacetate. The polypeptide is Uridine-5'-phosphate dioxygenase (Amycolatopsis sp).